A 123-amino-acid chain; its full sequence is Large ribosomal subunit protein uL18 (123 aa).

The protein belongs to the universal ribosomal protein uL18 family. In terms of assembly, part of the 50S ribosomal subunit; part of the 5S rRNA/L5/L18/L25 subcomplex. Contacts the 5S and 23S rRNAs.

This is one of the proteins that bind and probably mediate the attachment of the 5S RNA into the large ribosomal subunit, where it forms part of the central protuberance. In Chlamydia trachomatis serovar L2 (strain ATCC VR-902B / DSM 19102 / 434/Bu), this protein is Large ribosomal subunit protein uL18.